The chain runs to 440 residues: Sequestosome-1 (440 aa).

N-acetylalanine is present on Ala-2. The segment at Ala-2 to Arg-50 is interaction with LCK. Residues Ser-3–Lys-102 enclose the PB1 domain. The residue at position 24 (Ser-24) is a Phosphoserine. The tract at residues Pro-43–Arg-107 is interaction with PRKCZ and dimerization. The interaction with PAWR stretch occupies residues Arg-50–Asp-80. Lys-91 participates in a covalent cross-link: Glycyl lysine isopeptide (Lys-Gly) (interchain with G-Cter in ubiquitin). The tract at residues Val-122 to Ser-224 is interaction with GABRR3. The ZZ-type zinc-finger motif lies at His-123–Gly-173. Residues Cys-128, Cys-131, Cys-142, and Cys-145 each contribute to the Zn(2+) site. Tyr-148 bears the Phosphotyrosine mark. 4 residues coordinate Zn(2+): Cys-151, Cys-154, His-160, and His-163. Phosphoserine is present on residues Ser-170 and Ser-176. The tract at residues Ser-170–Pro-220 is LIM protein-binding (LB). Lys-189 participates in a covalent cross-link: Glycyl lysine isopeptide (Lys-Gly) (interchain with G-Cter in ubiquitin). The disordered stretch occupies residues Pro-196 to Asn-235. 4 positions are modified to phosphoserine: Ser-207, Ser-233, Ser-249, and Ser-266. A TRAF6-binding motif is present at residues Pro-228 to Ser-233. A disordered region spans residues Lys-264–Ala-390. Thr-269 is modified (phosphothreonine). The tract at residues Thr-269–Leu-440 is interaction with NTRK1. Phosphoserine is present on residues Ser-272 and Ser-282. Residues Ser-283–Pro-296 show a composition bias toward low complexity. S-palmitoyl cysteine attachment occurs at residues Cys-289 and Cys-290. A Phosphoserine modification is found at Ser-306. Residues Gln-310–Glu-324 are compositionally biased toward basic and acidic residues. Residues Arg-321–Ser-342 form an MAP1LC3B-binding region. Phosphoserine is present on residues Ser-328 and Ser-332. Residues Asp-336–Leu-341 carry the LIR motif. Over residues Asp-337 to Asp-347 the composition is skewed to basic and acidic residues. The segment at Asp-347–Glu-352 is interaction with KEAP1. Ser-349 is modified (phosphoserine; by ULK1). The span at Gly-351–Gly-373 shows a compositional bias: polar residues. 4 positions are modified to phosphoserine: Ser-355, Ser-361, Ser-365, and Ser-366. One can recognise a UBA domain in the interval Glu-389–Ser-434. A Phosphoserine; by CK2, ULK1 and TBK1 modification is found at Ser-403. Ser-407 carries the phosphoserine; by ULK1 modification. N6-acetyllysine; alternate occurs at positions 420 and 435. A Glycyl lysine isopeptide (Lys-Gly) (interchain with G-Cter in ubiquitin); alternate cross-link involves residue Lys-420. Lys-435 is covalently cross-linked (Glycyl lysine isopeptide (Lys-Gly) (interchain with G-Cter in SUMO2); alternate).

As to quaternary structure, homooligomer or heterooligomer; may form homotypic arrays. Dimerization interferes with ubiquitin binding. Component of a ternary complex with PAWR and PRKCZ. Forms a complex with JUB/Ajuba, PRKCZ and TRAF6. Identified in a complex with TRAF6 and CYLD. Identified in a heterotrimeric complex with ubiquitin and ZFAND5, where ZFAND5 and SQSTM1 both interact with the same ubiquitin molecule. Interacts (via LIR motif) with MAP1LC3A and MAP1LC3B, as well as with other ATG8 family members, including GABARAP, GABARAPL1 and GABARAPL2; these interactions are necessary for the recruitment MAP1 LC3 family members to inclusion bodies containing polyubiquitinated protein aggregates and for their degradation by autophagy. Interacts directly with PRKCI and PRKCZ. Interacts with EBI3, LCK, RASA1, NR2F2, NTRK1, NTRK2, NTRK3, NBR1, MAP2K5 and MAPKAPK5. Upon TNF-alpha stimulation, interacts with RIPK1 probably bridging IKBKB to the TNF-R1 complex composed of TNF-R1/TNFRSF1A, TRADD and RIPK1. Interacts with the proteasome subunits PSMD4 and PSMC2. Interacts with TRAF6. Interacts with 'Lys-63'-linked polyubiquitinated MAPT/TAU. Interacts with FHOD3. Interacts with CYLD. Interacts with SESN1. Interacts with SESN2. Interacts with ULK1. Interacts with UBD. Interacts with WDR81; the interaction is direct and regulates the interaction of SQSTM1 with ubiquitinated proteins. Interacts with WDFY3; this interaction is required to recruit WDFY3 to cytoplasmic bodies and to PML bodies. Interacts with LRRC25. Interacts with STING1; leading to relocalization of STING1 to autophagosomes. Interacts (when phosphorylated at Ser-349) with KEAP1; the interaction is direct and inactivates the BCR(KEAP1) complex by sequestering KEAP1 in inclusion bodies, promoting its degradation. Interacts with MOAP1; promoting dissociation of SQSTM1 inclusion bodies that sequester KEAP1. Interacts with GBP1. Interacts with TAX1BP1. Interacts with (ubiquitinated) PEX5; specifically binds PEX5 ubiquitinated at 'Lys-209' in response to reactive oxygen species (ROS). Interacts (via PB1 domain) with TNS2; the interaction leads to sequestration of TNS2 in cytoplasmic aggregates with SQSTM1 and promotes TNS2 ubiquitination and proteasomal degradation. Interacts with IRS1; the interaction is disrupted by the presence of tensin TNS2. Interacts with TRIM5. Interacts with TRIM11 (when ubiquitinated); promoting AIM2 recruitment to autophagosomes and autophagy-dependent degradation of AIM2. Interacts with TRIM13. Interacts with TRIM16. Interacts with TRIM23. Interacts with TRIM50. Interacts with TRIM55. Interacts with ECSIT; this interaction inhibits TLR4 signaling via functional regulation of the TRAF6-ECSIT complex. Interacts with GABRR1, GABRR2 and GABRR3. Interacts with WDR83. Interacts with GRB2. Interacts with USP12; the interaction is independent of USP12 deubiquitinase activity and may be involved in regulation of autophagic flux. Interacts with ASB6. Phosphorylation at Ser-407 by ULK1 destabilizes the UBA dimer interface and increases binding affinity to ubiquitinated proteins. Phosphorylation at Ser-407 also primes for subsequent phosphorylation at Ser-403. Phosphorylation at Ser-403 by CK2 or ULK1 promotes binding to ubiquitinated proteins by increasing the affinity between the UBA domain and polyubiquitin chains. Phosphorylation at Ser-403 by ULK1 is stimulated by SESN2. Phosphorylated at Ser-403 by TBK1, leading to promote relocalization of 'Lys-63'-linked ubiquitinated STING1 to autophagosomes. Phosphorylation at Ser-349 by ULK1 promotes interaction with KEAP1 and inactivation of the BCR(KEAP1) complex, promoting NFE2L2/NRF2 nuclear accumulation and expression of phase II detoxifying enzymes. Phosphorylated in vitro by TTN. Post-translationally, ubiquitinated by UBE2J1 and RNF26 at Lys-435: ubiquitinated SQSTM1 attracts specific vesicle-associated adapters, forming a molecular bridge that restrains cognate vesicles in the perinuclear region and organizes the endosomal pathway for efficient cargo transport. Ubiquitination by UBE2D2 and UBE2D3 increases its ability to bind polyubiquitin chains by destabilizing the UBA dimer interface. Deubiquitination by USP15 releases target vesicles for fast transport into the cell periphery. Ubiquitinated by the BCR(KEAP1) complex at Lys-420, increasing SQSTM1 sequestering activity and promoting its degradation. Ubiquitinated via 'Lys-29' and 'Lys-33'-linked polyubiquitination leading to xenophagic targeting of bacteria and inhibition of their replication. In terms of processing, acetylated at Lys-420 and Lys-435 by KAT5/TIP60, promotes activity by destabilizing the UBA dimer interface and increases binding affinity to ubiquitinated proteins. Deacetylated by HDAC6. Palmitoylation at Cys-289 and Cys-290 by ZDHHC19 is required for efficient autophagic degradation of SQSTM1-cargo complexes by promoting affinity for ATG8 proteins and recruitment of p62 bodies to autophagosomes. Dealmitoylated at Cys-289 and Cys-290 by LYPLA1. Post-translationally, (Microbial infection) Cleaved by S.pyogenes SpeB protease; leading to its degradation. Degradation by SpeB prevents autophagy, promoting to S.pyogenes intracellular replication. In terms of processing, (Microbial infection) Deubiquitinated by Epstein-Barr virus BPLF1; leading to inhibition of the recruitment of MAP1LC3A/LC3 to SQSTM1-positive structures. Ubiquitously expressed.

The protein localises to the cytoplasmic vesicle. It is found in the autophagosome. It localises to the preautophagosomal structure. Its subcellular location is the cytoplasm. The protein resides in the cytosol. The protein localises to the nucleus. It is found in the PML body. It localises to the late endosome. Its subcellular location is the lysosome. The protein resides in the endoplasmic reticulum. The protein localises to the myofibril. It is found in the sarcomere. Functionally, molecular adapter required for selective macroautophagy (aggrephagy) by acting as a bridge between polyubiquitinated proteins and autophagosomes. Promotes the recruitment of ubiquitinated cargo proteins to autophagosomes via multiple domains that bridge proteins and organelles in different steps. SQSTM1 first mediates the assembly and removal of ubiquitinated proteins by undergoing liquid-liquid phase separation upon binding to ubiquitinated proteins via its UBA domain, leading to the formation of insoluble cytoplasmic inclusions, known as p62 bodies. SQSTM1 then interacts with ATG8 family proteins on autophagosomes via its LIR motif, leading to p62 body recruitment to autophagosomes, followed by autophagic clearance of ubiquitinated proteins. SQSTM1 is itself degraded along with its ubiquitinated cargos. Also required to recruit ubiquitinated proteins to PML bodies in the nucleus. Also involved in autophagy of peroxisomes (pexophagy) in response to reactive oxygen species (ROS) by acting as a bridge between ubiquitinated PEX5 receptor and autophagosomes. Acts as an activator of the NFE2L2/NRF2 pathway via interaction with KEAP1: interaction inactivates the BCR(KEAP1) complex by sequestering the complex in inclusion bodies, promoting nuclear accumulation of NFE2L2/NRF2 and subsequent expression of cytoprotective genes. Promotes relocalization of 'Lys-63'-linked ubiquitinated STING1 to autophagosomes. Involved in endosome organization by retaining vesicles in the perinuclear cloud: following ubiquitination by RNF26, attracts specific vesicle-associated adapters, forming a molecular bridge that restrains cognate vesicles in the perinuclear region and organizes the endosomal pathway for efficient cargo transport. Sequesters tensin TNS2 into cytoplasmic puncta, promoting TNS2 ubiquitination and proteasomal degradation. May regulate the activation of NFKB1 by TNF-alpha, nerve growth factor (NGF) and interleukin-1. May play a role in titin/TTN downstream signaling in muscle cells. Adapter that mediates the interaction between TRAF6 and CYLD. The protein is Sequestosome-1 of Homo sapiens (Human).